We begin with the raw amino-acid sequence, 176 residues long: Phosphopantetheine adenylyltransferase (176 aa).

Residue T11 participates in substrate binding. ATP contacts are provided by residues 11–12 (TF) and H19. The substrate site is built by K43, L93, and R107. ATP-binding positions include E117 and 141-147 (LSVVSSS).

The protein belongs to the bacterial CoaD family. Homohexamer. It depends on Mg(2+) as a cofactor.

Its subcellular location is the cytoplasm. The enzyme catalyses (R)-4'-phosphopantetheine + ATP + H(+) = 3'-dephospho-CoA + diphosphate. It participates in cofactor biosynthesis; coenzyme A biosynthesis; CoA from (R)-pantothenate: step 4/5. Its function is as follows. Reversibly transfers an adenylyl group from ATP to 4'-phosphopantetheine, yielding dephospho-CoA (dPCoA) and pyrophosphate. The polypeptide is Phosphopantetheine adenylyltransferase (Tropheryma whipplei (strain TW08/27) (Whipple's bacillus)).